A 345-amino-acid chain; its full sequence is Phosphoribosylformylglycinamidine cyclo-ligase (345 aa).

Belongs to the AIR synthase family.

It is found in the cytoplasm. It catalyses the reaction 2-formamido-N(1)-(5-O-phospho-beta-D-ribosyl)acetamidine + ATP = 5-amino-1-(5-phospho-beta-D-ribosyl)imidazole + ADP + phosphate + H(+). The protein operates within purine metabolism; IMP biosynthesis via de novo pathway; 5-amino-1-(5-phospho-D-ribosyl)imidazole from N(2)-formyl-N(1)-(5-phospho-D-ribosyl)glycinamide: step 2/2. In Escherichia coli O45:K1 (strain S88 / ExPEC), this protein is Phosphoribosylformylglycinamidine cyclo-ligase.